A 397-amino-acid chain; its full sequence is MAKAKFERTKPHVNIGTIGHVDHGKTTLTAAISRVLSERLPSNTNVKQDFDAIDSAPEERQRGITINISHIEYETEKRHYAHVDAPGHADYIKNMITGAAQMDGAILVVAATDGAMAQTREHVLLAKQVGVPYLLVALNKADMVSDEEILELVELEVRELLSTHGFDGENVPVVRVSGLKALEGDQKWGDAVMELMKAVDESIPDPVRDRDKPFLMPIEDVFTITGRGTVVTGRAERGVLAVNSEVEIVGIRPTQKTTVTGIEMFRKQLDEAWAGENCGLLLRGTKREDVERGQVVVKPGSVTPHTKFEGKAYILSKDEGGRHNPFYSNYRPQFYFRTTDVTGVITLPEGTEMVMPGDTISITVDLIQPIAMEEGLGFAIREGGRTVGAGTVVKILE.

In terms of domain architecture, tr-type G spans 10-207 (KPHVNIGTIG…AVDESIPDPV (198 aa)). A G1 region spans residues 19 to 26 (GHVDHGKT). 19-26 (GHVDHGKT) provides a ligand contact to GTP. Thr-26 serves as a coordination point for Mg(2+). The tract at residues 63–67 (GITIN) is G2. The segment at 84–87 (DAPG) is G3. Residues 84–88 (DAPGH) and 139–142 (NKAD) contribute to the GTP site. The G4 stretch occupies residues 139–142 (NKAD). The tract at residues 177–179 (SGL) is G5.

The protein belongs to the TRAFAC class translation factor GTPase superfamily. Classic translation factor GTPase family. EF-Tu/EF-1A subfamily. In terms of assembly, monomer.

It localises to the cytoplasm. The catalysed reaction is GTP + H2O = GDP + phosphate + H(+). In terms of biological role, GTP hydrolase that promotes the GTP-dependent binding of aminoacyl-tRNA to the A-site of ribosomes during protein biosynthesis. The sequence is that of Elongation factor Tu from Tropheryma whipplei (strain TW08/27) (Whipple's bacillus).